The sequence spans 427 residues: Tol-Pal system protein TolB (427 aa).

The first 23 residues, 1 to 23 (MKLLKRLVSVFAIVLAVGSNAFA), serve as a signal peptide directing secretion.

Belongs to the TolB family. As to quaternary structure, the Tol-Pal system is composed of five core proteins: the inner membrane proteins TolA, TolQ and TolR, the periplasmic protein TolB and the outer membrane protein Pal. They form a network linking the inner and outer membranes and the peptidoglycan layer.

It is found in the periplasm. Its function is as follows. Part of the Tol-Pal system, which plays a role in outer membrane invagination during cell division and is important for maintaining outer membrane integrity. This chain is Tol-Pal system protein TolB, found in Haemophilus influenzae (strain PittEE).